The following is a 151-amino-acid chain: SsrA-binding protein (151 aa).

The disordered stretch occupies residues 132 to 151 (KRQTIKKRDQDREIHRKYGI).

This sequence belongs to the SmpB family.

The protein resides in the cytoplasm. Functionally, required for rescue of stalled ribosomes mediated by trans-translation. Binds to transfer-messenger RNA (tmRNA), required for stable association of tmRNA with ribosomes. tmRNA and SmpB together mimic tRNA shape, replacing the anticodon stem-loop with SmpB. tmRNA is encoded by the ssrA gene; the 2 termini fold to resemble tRNA(Ala) and it encodes a 'tag peptide', a short internal open reading frame. During trans-translation Ala-aminoacylated tmRNA acts like a tRNA, entering the A-site of stalled ribosomes, displacing the stalled mRNA. The ribosome then switches to translate the ORF on the tmRNA; the nascent peptide is terminated with the 'tag peptide' encoded by the tmRNA and targeted for degradation. The ribosome is freed to recommence translation, which seems to be the essential function of trans-translation. This Lactobacillus gasseri (strain ATCC 33323 / DSM 20243 / BCRC 14619 / CIP 102991 / JCM 1131 / KCTC 3163 / NCIMB 11718 / NCTC 13722 / AM63) protein is SsrA-binding protein.